Here is a 359-residue protein sequence, read N- to C-terminus: Glycerol-3-phosphate dehydrogenase [NAD(P)+] (359 aa).

NADPH contacts are provided by T11, W12, R32, and K107. Sn-glycerol 3-phosphate is bound by residues K107 and G138. A142 contacts NADPH. The sn-glycerol 3-phosphate site is built by K193, D246, S256, R257, and N258. K193 (proton acceptor) is an active-site residue. R257 lines the NADPH pocket. 2 residues coordinate NADPH: V281 and E283.

It belongs to the NAD-dependent glycerol-3-phosphate dehydrogenase family.

Its subcellular location is the cytoplasm. It catalyses the reaction sn-glycerol 3-phosphate + NAD(+) = dihydroxyacetone phosphate + NADH + H(+). It carries out the reaction sn-glycerol 3-phosphate + NADP(+) = dihydroxyacetone phosphate + NADPH + H(+). It functions in the pathway membrane lipid metabolism; glycerophospholipid metabolism. Catalyzes the reduction of the glycolytic intermediate dihydroxyacetone phosphate (DHAP) to sn-glycerol 3-phosphate (G3P), the key precursor for phospholipid synthesis. This is Glycerol-3-phosphate dehydrogenase [NAD(P)+] from Dehalococcoides mccartyi (strain CBDB1).